A 499-amino-acid chain; its full sequence is MPGGFILAIDEGTTSARAIIYNQDLEVLGIGQYDFPQHYPSPGYVEHNPDEIWNAQMLAIKEAMKKAKIESRQVAGIGVTNQRETTILWDAISGKPIYNAIVWQDRRTSNITDWLKENYFGMIKDKTGLIPDPYFSGSKIKWILDNLPNVRSKAEKGEIKFGTIDTYLIWKLTNGKIHVTDYSNASRTMLFNINKLEWDREILELLKIPESILPEVRPSSDIYGYTEVLGSSIPISGDAGDQQAALFGQVAYDMGEVKSTYGTGSFILMNIGSNPIFSENLLTTIAWGLESKRVTYALEGSIFITGAAVQWFRDGLRAIDASDDIEPLAASVPDTGGVYFVPAFVGLGAPYWDPYARGLIIGITRGTTKAHIARAILESIAYQNRDVIEIMEKESGTKINILKVDGGGAKDNLLMQFQADILGIRVVRPKVMETASMGVAMLAGLAINYWNSLNELKQKWTVDKEFIPSINKEERERRYNAWKEAVKRSLGWEKSLGSK.

Residue T13 participates in ADP binding. ATP contacts are provided by T13, T14, and S15. Position 13 (T13) interacts with sn-glycerol 3-phosphate. R17 provides a ligand contact to ADP. Sn-glycerol 3-phosphate contacts are provided by R83, E84, Y134, and D241. The glycerol site is built by R83, E84, Y134, D241, and Q242. T263 and G306 together coordinate ADP. T263, G306, Q310, and G407 together coordinate ATP. G407 lines the ADP pocket.

The protein belongs to the FGGY kinase family.

It carries out the reaction glycerol + ATP = sn-glycerol 3-phosphate + ADP + H(+). It participates in polyol metabolism; glycerol degradation via glycerol kinase pathway; sn-glycerol 3-phosphate from glycerol: step 1/1. Key enzyme in the regulation of glycerol uptake and metabolism. Catalyzes the phosphorylation of glycerol to yield sn-glycerol 3-phosphate. In Saccharolobus solfataricus (strain ATCC 35092 / DSM 1617 / JCM 11322 / P2) (Sulfolobus solfataricus), this protein is Glycerol kinase 2.